Consider the following 140-residue polypeptide: Pro-vaccinia growth factor (140 aa).

The signal sequence occupies residues methionine 1 to phenylalanine 18. Residues alanine 19–tyrosine 100 are Extracellular-facing. An N-linked (GlcNAc...) asparagine; by host glycan is attached at asparagine 34. An EGF-like domain is found at alanine 41–glutamine 81. Cystine bridges form between cysteine 45/cysteine 58, cysteine 53/cysteine 69, and cysteine 71/cysteine 80. Asparagine 95 carries N-linked (GlcNAc...) asparagine; by host glycosylation. A helical membrane pass occupies residues isoleucine 101 to leucine 121. Residues serine 122–proline 140 lie on the Cytoplasmic side of the membrane.

Belongs to the orthopoxvirus OPG019 family. In terms of assembly, vaccinia growth factor interacts with host EGFR and promotes EGFR dimerization.

Its subcellular location is the host membrane. The protein localises to the secreted. Stimulates cellular proliferation (hyperplasia)and mobility around infected cells to promote rapid and efficient spread of infection. This effect is beneficial for virus replication in vivo, because poxviruses replicate possibly better in proliferating cells than in quiescent cells. Acts by binding host EGFR, inducing its dimerization, autophosphorylation and leading to activation of several cellular pathways regulating cell proliferation or cell survival. The activation by host EGFR of mitogen activated protein kinases (MAPK) and extracellular-signal regulated kinases (ERK) are essential for the positive effect of vaccinia growth factor on poxvirus virulence in vivo. In Homo sapiens (Human), this protein is Pro-vaccinia growth factor (OPG019).